The primary structure comprises 484 residues: Protein nucleotidyltransferase YdiU (484 aa).

The ATP site is built by Gly87, Gly89, Arg90, Lys110, Asp122, Gly123, Arg173, and Arg180. Residue Asp249 is the Proton acceptor of the active site. Mg(2+)-binding residues include Asn250 and Asp259. An ATP-binding site is contributed by Asp259.

Belongs to the SELO family. The cofactor is Mg(2+). Mn(2+) is required as a cofactor.

The catalysed reaction is L-seryl-[protein] + ATP = 3-O-(5'-adenylyl)-L-seryl-[protein] + diphosphate. The enzyme catalyses L-threonyl-[protein] + ATP = 3-O-(5'-adenylyl)-L-threonyl-[protein] + diphosphate. It catalyses the reaction L-tyrosyl-[protein] + ATP = O-(5'-adenylyl)-L-tyrosyl-[protein] + diphosphate. It carries out the reaction L-histidyl-[protein] + UTP = N(tele)-(5'-uridylyl)-L-histidyl-[protein] + diphosphate. The catalysed reaction is L-seryl-[protein] + UTP = O-(5'-uridylyl)-L-seryl-[protein] + diphosphate. The enzyme catalyses L-tyrosyl-[protein] + UTP = O-(5'-uridylyl)-L-tyrosyl-[protein] + diphosphate. Nucleotidyltransferase involved in the post-translational modification of proteins. It can catalyze the addition of adenosine monophosphate (AMP) or uridine monophosphate (UMP) to a protein, resulting in modifications known as AMPylation and UMPylation. The protein is Protein nucleotidyltransferase YdiU of Lachnoclostridium phytofermentans (strain ATCC 700394 / DSM 18823 / ISDg) (Clostridium phytofermentans).